A 138-amino-acid polypeptide reads, in one-letter code: Putative protein encoded by LINC02912 (138 aa).

Helical transmembrane passes span 32–52 (FALS…CLIC) and 65–85 (CLIN…TISQ). Residues 109-138 (SGGQSQHSWPCPERSKNLPQVSKQLRNRAG) form a disordered region.

Its subcellular location is the membrane. The chain is Putative protein encoded by LINC02912 from Homo sapiens (Human).